Here is a 926-residue protein sequence, read N- to C-terminus: Periplasmic nitrate reductase (926 aa).

The tat-type signal signal peptide spans 1–30; the sequence is MNRRDFIKSAAASAACASAGIAIPANLSAA. A 4Fe-4S Mo/W bis-MGD-type domain is found at 37 to 93; that stretch reads WRWDKAACRFCGTGCGIMVATKEGKIVAVKGDPEAPVNRGLNCIKGYFNAKIMYGED. [4Fe-4S] cluster contacts are provided by C44, C47, C51, and C79. Mo-bis(molybdopterin guanine dinucleotide) is bound by residues K81, Q149, N174, C178, 211–218, M419, Q423, N529, 554–555, K577, D604, and 816–825; these read WGANMAEM, SD, and TGRVLEHWHS. Residue W892 participates in substrate binding. The Mo-bis(molybdopterin guanine dinucleotide) site is built by N900 and K917.

The protein belongs to the prokaryotic molybdopterin-containing oxidoreductase family. NasA/NapA/NarB subfamily. Component of the periplasmic nitrate reductase NapAB complex composed of NapA and NapB. It depends on [4Fe-4S] cluster as a cofactor. Requires Mo-bis(molybdopterin guanine dinucleotide) as cofactor. In terms of processing, predicted to be exported by the Tat system. The position of the signal peptide cleavage has not been experimentally proven.

Its subcellular location is the periplasm. The catalysed reaction is 2 Fe(II)-[cytochrome] + nitrate + 2 H(+) = 2 Fe(III)-[cytochrome] + nitrite + H2O. Functionally, catalytic subunit of the periplasmic nitrate reductase complex NapAB. Receives electrons from NapB and catalyzes the reduction of nitrate to nitrite. The protein is Periplasmic nitrate reductase of Campylobacter curvus (strain 525.92).